We begin with the raw amino-acid sequence, 783 residues long: Transcription factor E4F1 (783 aa).

The segment at 40–84 (GFLGLPAPFSEEDEDDVHRCGRCQVEFTALEDFVQHKIQKTCHRA) is required for ubiquitin ligase activity. Position 49 is a phosphoserine (serine 49). Positions 185-264 (LLVNKEGRYV…GKSFRESGAL (80 aa)) are mediates dimerization, DNA-binding, transcription repression of CCNA2 and interaction with HMGA2. C2H2-type zinc fingers lie at residues 193–215 (YVCMLCHKTFKTGSILKAHMVTH) and 221–243 (HECKLCGASFRTKGSLIRHHRRH). The segment at 249-273 (YKCAKCGKSFRESGALTRHLKSLTP) adopts a C2H2-type 3; degenerate zinc-finger fold. Residues 368-565 (NLLHQAMQNS…REKGSLVRHV (198 aa)) form a mediates interaction with CDKN2A region. The segment at 386–407 (GEESALEPAPPSGSSPQCLGDG) is disordered. 5 C2H2-type zinc fingers span residues 434–456 (HPCPQCSETFPTAATLEAHKRGH), 462–484 (FTCTQCGKAFPKAYLLKKHQEVH), 490–512 (FRCGDCGKLYKTIAHVRGHRRVH), 518–540 (FPCPQCGKRYKTKNAQQVHFRTH), and 546–568 (HVCQFCSRGFREKGSLVRHVRHH). The interval 434 to 598 (HPCPQCSETF…LNRHLRTKGG (165 aa)) is interaction with BMI1. The tract at residues 520–579 (CPQCGKRYKTKNAQQVHFRTHLEEKPHVCQFCSRGFREKGSLVRHVRHHTGEKPFKCYKC) is mediates interaction with TP53. A C2H2-type 9; degenerate zinc finger spans residues 574-596 (FKCYKCGRGFAEHGTLNRHLRTK). A mediates interaction with RASSF1 region spans residues 574–596 (FKCYKCGRGFAEHGTLNRHLRTK).

In terms of assembly, homodimer; binds DNA as a dimer. Forms a complex with CDKN2A and TP53. Interacts with HDAC1, HMGA2 and RASSF1. Interactions with TP53, RB1, ANP32A and probably BMI1 and FHL2 regulate E4F1 activity. Post-translationally, phosphorylated; phosphorylation is cell cycle-dependent and regulates DNA-binding activity and function. In terms of processing, may be sumoylated by UBE2I upon interaction with CDKN2A. In terms of tissue distribution, ubiquitously expressed.

It is found in the nucleus. It localises to the nucleoplasm. The protein resides in the cytoplasm. It catalyses the reaction S-ubiquitinyl-[E2 ubiquitin-conjugating enzyme]-L-cysteine + [acceptor protein]-L-lysine = [E2 ubiquitin-conjugating enzyme]-L-cysteine + N(6)-ubiquitinyl-[acceptor protein]-L-lysine.. Its pathway is protein modification; protein ubiquitination. Functionally, may function as a transcriptional repressor. May also function as a ubiquitin ligase mediating ubiquitination of chromatin-associated TP53. Functions in cell survival and proliferation through control of the cell cycle. Functions in the p53 and pRB tumor suppressor pathways and regulates the cyclin CCNA2 transcription. The sequence is that of Transcription factor E4F1 (E4f1) from Mus musculus (Mouse).